The chain runs to 239 residues: MTAVVNIAAYKFVSIANPADLREPMLEQAGQRQLKGTVLLAPEGINLFLAGAADAIEGFLRWLRADARFADLQAKYSESARMPFRKLLVKVKREIIRMDHPAIRPEAGRAPAVDAATLRRWLAQGRELVMLDTRNAFEVEVGTFRGALDWRIERFTQFPQAVRDNQAALAGKTVVSFCMGGIRCEKAAIYMAEAGIEHVYQLEGGILKYFEETDGAGFDGACFVFDERVALDAALAPQA.

Positions 124-214 (QGRELVMLDT…GILKYFEETD (91 aa)) constitute a Rhodanese domain. Cys178 functions as the Cysteine persulfide intermediate in the catalytic mechanism.

It belongs to the TrhO family.

It carries out the reaction uridine(34) in tRNA + AH2 + O2 = 5-hydroxyuridine(34) in tRNA + A + H2O. In terms of biological role, catalyzes oxygen-dependent 5-hydroxyuridine (ho5U) modification at position 34 in tRNAs. The protein is tRNA uridine(34) hydroxylase of Bordetella parapertussis (strain 12822 / ATCC BAA-587 / NCTC 13253).